Reading from the N-terminus, the 476-residue chain is MLPKFRSRSSIIKNTERISNILSGGKLTVCGSKLGGLYTFEKCTFNKYYSSSQYQHTGRPVGGNIHSSSNQQRQKNSEAPRINEIPPSTSSVEKSTTIPNSSVVLDHLLNEGENTLEEVKPSEIHPHMSWSSKSEGKMFKIPEELLNKLNGFGALEKQKKSFSFFTSASLLHRKITTELVNVLQRSKDQGTKDGRFLLDGAPGSGRSIALIQAELFALSQPNFIVLPVHNCEGWVNSTSSYGYDEQLKLWVQPDLIKGFLTSVMKTNSDKLKKLKTFESHELLQNECIPAGTDLLSFLHKLIASSNAPKSLEIFLQELNNNTKSNSNMKVLLVIDNISILSVVTKYKDKKNNFLPPKDFYFINLLFKYISGSLTFNRGTVLAATSSQPRVSTPSLDIALGVAHRNPYKSSDETILDSLQSVHILNMEPYTLDESRRMMEYLVSSNVCLEKVDNYLQNHVLSGGNPRKFFDACTRLA.

Residues 1-54 (MLPKFRSRSSIIKNTERISNILSGGKLTVCGSKLGGLYTFEKCTFNKYYSSSQY) constitute a mitochondrion transit peptide. The disordered stretch occupies residues 58–97 (GRPVGGNIHSSSNQQRQKNSEAPRINEIPPSTSSVEKSTT). Composition is skewed to polar residues over residues 65–74 (IHSSSNQQRQ) and 86–97 (PPSTSSVEKSTT). 200–207 (GAPGSGRS) provides a ligand contact to ATP.

Belongs to the mitochondrion-specific ribosomal protein mS29 family. Component of the mitochondrial small ribosomal subunit (mt-SSU). Mature yeast 74S mitochondrial ribosomes consist of a small (37S) and a large (54S) subunit. The 37S small subunit contains a 15S ribosomal RNA (15S mt-rRNA) and at least 32 different proteins. The 54S large subunit contains a 21S rRNA (21S mt-rRNA) and at least 45 different proteins.

The protein localises to the mitochondrion. Component of the mitochondrial ribosome (mitoribosome), a dedicated translation machinery responsible for the synthesis of mitochondrial genome-encoded proteins, including at least some of the essential transmembrane subunits of the mitochondrial respiratory chain. The mitoribosomes are attached to the mitochondrial inner membrane and translation products are cotranslationally integrated into the membrane. mS29 binds GTP and is probably an active GTPase. GTP hydrolysis may be linked to subunit association. mS29 also has an extraribosomal function, being required for maintenance of mitochondrial DNA. The sequence is that of Small ribosomal subunit protein mS29 (rsm23) from Schizosaccharomyces pombe (strain 972 / ATCC 24843) (Fission yeast).